A 157-amino-acid chain; its full sequence is UPF0758 protein VC_0510 (157 aa).

In terms of domain architecture, MPN spans 36 to 157 (ALTNPDATKE…CTSFAERGWL (122 aa)). Zn(2+) contacts are provided by H107, H109, and D120. The JAMM motif signature appears at 107–120 (HNHPSGDSTPSQAD).

It belongs to the UPF0758 family.

This Vibrio cholerae serotype O1 (strain ATCC 39315 / El Tor Inaba N16961) protein is UPF0758 protein VC_0510.